The primary structure comprises 231 residues: Beta-casein (231 aa).

The signal sequence occupies residues 1–15; sequence MKVFILACLVALALA. Ser24 carries the post-translational modification Phosphoserine. Thr27 carries the post-translational modification Phosphothreonine. A phosphoserine mark is found at Ser29, Ser31, and Ser32.

It belongs to the beta-casein family. As to expression, mammary gland specific. Secreted in milk.

It localises to the secreted. Its function is as follows. Important role in determination of the surface properties of the casein micelles. The sequence is that of Beta-casein (Csn2) from Rattus norvegicus (Rat).